The sequence spans 104 residues: MERVASIMYLYPGNQEEYKKRHDALWPEMKEALKAHGAANYSIFLDEKTDTLFAYVEVEDKAIYDKIAETEICQKWWKYMAPIMKSNPNNSPVALDLKEVFYLA.

Tyr18 serves as a coordination point for substrate. Catalysis depends on His22, which acts as the Proton donor. Substrate is bound by residues Tyr41 and 76-77 (WW).

Belongs to the rhamnose mutarotase family. Homodimer.

The protein resides in the cytoplasm. It carries out the reaction alpha-L-rhamnose = beta-L-rhamnose. It functions in the pathway carbohydrate metabolism; L-rhamnose metabolism. Functionally, involved in the anomeric conversion of L-rhamnose. The protein is L-rhamnose mutarotase of Listeria monocytogenes serotype 4b (strain F2365).